Consider the following 152-residue polypeptide: MTRYKKVIAQNKKALFNYFIEERLEAGIVLKGSEVQSLRQGKASIEESYAGDTGHELFLYNCHIAEYEKANKFNHATRRPRKLLLHTKEMKKIIGKIKIKGYTLVALSMYFNKKNKVKVELGLAKGKKLYDKRESIKEKDWQRDQSRLIRQK.

The protein belongs to the SmpB family.

It localises to the cytoplasm. Required for rescue of stalled ribosomes mediated by trans-translation. Binds to transfer-messenger RNA (tmRNA), required for stable association of tmRNA with ribosomes. tmRNA and SmpB together mimic tRNA shape, replacing the anticodon stem-loop with SmpB. tmRNA is encoded by the ssrA gene; the 2 termini fold to resemble tRNA(Ala) and it encodes a 'tag peptide', a short internal open reading frame. During trans-translation Ala-aminoacylated tmRNA acts like a tRNA, entering the A-site of stalled ribosomes, displacing the stalled mRNA. The ribosome then switches to translate the ORF on the tmRNA; the nascent peptide is terminated with the 'tag peptide' encoded by the tmRNA and targeted for degradation. The ribosome is freed to recommence translation, which seems to be the essential function of trans-translation. The polypeptide is SsrA-binding protein (Rickettsia canadensis (strain McKiel)).